Here is a 142-residue protein sequence, read N- to C-terminus: Gonadotropin subunit beta-2 (142 aa).

A signal peptide spans 1 to 23 (MLGLHVGTLISLFLCILLEPVEG). Intrachain disulfides connect cysteine 29-cysteine 77, cysteine 43-cysteine 92, cysteine 46-cysteine 130, cysteine 54-cysteine 108, cysteine 58-cysteine 110, and cysteine 113-cysteine 120. The N-linked (GlcNAc...) asparagine glycan is linked to asparagine 33.

Belongs to the glycoprotein hormones subunit beta family. As to quaternary structure, heterodimer of an alpha and a beta chain.

Its subcellular location is the secreted. Its function is as follows. Involved in gametogenesis and steroidogenesis. In Oncorhynchus keta (Chum salmon), this protein is Gonadotropin subunit beta-2 (cgbb).